A 235-amino-acid polypeptide reads, in one-letter code: Iron-sulfur cluster co-chaperone protein HscB (235 aa).

Residues Cys41, Cys44, Cys58, and Cys61 each contribute to the a divalent metal cation site. Residues 72–144 (DYFSLMDCNR…LSRGLYLLKL (73 aa)) form the J domain.

This sequence belongs to the HscB family. As to quaternary structure, interacts with ISCU and HSPA9 to form an iron-sulfur transfer complex. Interacts with SDHAF1 (via the first LYR motif); the interaction recruits the iron-sulfur transfer complex composed of HSC20, HSPA9 and ISCU and mediates the incorporation of iron-sulfur clusters into SDHB which also interacts with HSC20. Interacts with the cytoplasmic form of ISCU and with CIA complex member CIAO1 (via LYR motif). In terms of assembly, homodimer. Interacts with ISCU (cytoplasmic form); this interaction stabilizes the (Fe-S) clusters on ISCU. Interacts with the CIA complex member CIAO1 (via LYR motif). Expressed in lung, brain, stomach, spleen, ovary, testis, liver, muscle and heart.

It is found in the cytoplasm. It localises to the mitochondrion. It participates in cofactor biosynthesis; iron-sulfur cluster biosynthesis. Acts as a co-chaperone in iron-sulfur cluster assembly in mitochondria. Required for incorporation of iron-sulfur clusters into SDHB, the iron-sulfur protein subunit of succinate dehydrogenase that is involved in complex II of the mitochondrial electron transport chain. Recruited to SDHB by interaction with SDHAF1 which first binds SDHB and then recruits the iron-sulfur transfer complex formed by HSC20, HSPA9 and ISCU through direct binding to HSC20. Plays an essential role in hematopoiesis. Its function is as follows. Acts as a co-chaperone in iron-sulfur cluster assembly in the cytoplasm. Also mediates complex formation between components of the cytosolic iron-sulfur biogenesis pathway and the CIA targeting complex composed of CIAO1, DIPK1B/FAM69B and MMS19 by binding directly to the scaffold protein ISCU and to CIAO1. This facilitates iron-sulfur cluster insertion into a number of cytoplasmic and nuclear proteins including POLD1, ELP3, DPYD and PPAT. The protein is Iron-sulfur cluster co-chaperone protein HscB of Homo sapiens (Human).